The sequence spans 120 residues: MALDTEKIIEELKGASILELNDLVKAIEDEFDVTAAAPVAAAGAAGAAEAKSSFDVELTEAGQEKVKVIKVVRDITGLGLKDSKDLVDGAPKNVKEGVSEDEANDIKAKLEEVGATVTLK.

It belongs to the bacterial ribosomal protein bL12 family. As to quaternary structure, homodimer. Part of the ribosomal stalk of the 50S ribosomal subunit. Forms a multimeric L10(L12)X complex, where L10 forms an elongated spine to which 2 to 4 L12 dimers bind in a sequential fashion. Binds GTP-bound translation factors.

Functionally, forms part of the ribosomal stalk which helps the ribosome interact with GTP-bound translation factors. Is thus essential for accurate translation. This is Large ribosomal subunit protein bL12 from Lactobacillus acidophilus (strain ATCC 700396 / NCK56 / N2 / NCFM).